The chain runs to 489 residues: UDP-N-acetylmuramate--L-alanine ligase (489 aa).

Residue 128–134 (GTHGKTT) participates in ATP binding.

This sequence belongs to the MurCDEF family.

The protein resides in the cytoplasm. The catalysed reaction is UDP-N-acetyl-alpha-D-muramate + L-alanine + ATP = UDP-N-acetyl-alpha-D-muramoyl-L-alanine + ADP + phosphate + H(+). It functions in the pathway cell wall biogenesis; peptidoglycan biosynthesis. Its function is as follows. Cell wall formation. The protein is UDP-N-acetylmuramate--L-alanine ligase of Shewanella woodyi (strain ATCC 51908 / MS32).